We begin with the raw amino-acid sequence, 508 residues long: Lysine--tRNA ligase (508 aa).

Glutamate 418 and glutamate 425 together coordinate Mg(2+).

The protein belongs to the class-II aminoacyl-tRNA synthetase family. In terms of assembly, homodimer. Mg(2+) is required as a cofactor.

The protein resides in the cytoplasm. The catalysed reaction is tRNA(Lys) + L-lysine + ATP = L-lysyl-tRNA(Lys) + AMP + diphosphate. The sequence is that of Lysine--tRNA ligase from Burkholderia multivorans (strain ATCC 17616 / 249).